A 1249-amino-acid chain; its full sequence is Pleckstrin homology-like domain family B member 2 (1249 aa).

2 disordered regions span residues 64–85 (QPVS…SPSL) and 128–154 (DHYT…SSRN). A phosphoserine mark is found at Ser-71 and Ser-73. Residues 74–84 (PMGTSVRSSPS) show a composition bias toward polar residues. The span at 128–143 (DHYTGRDSERSTRLSE) shows a compositional bias: basic and acidic residues. Residues Ser-156, Ser-203, Ser-241, and Ser-244 each carry the phosphoserine modification. Disordered regions lie at residues 190–248 (SPIS…LSNM) and 264–289 (NQMS…GEKD). The segment covering 231–248 (ENVSVRTRKYSGSSLSNM) has biased composition (polar residues). A compositionally biased stretch (low complexity) spans 267-283 (SPLSLPPRSSLGNSRRG). Residues Ser-329, Ser-333, Ser-347, Ser-380, Ser-383, Ser-389, Ser-411, Ser-416, Ser-465, Ser-486, and Ser-510 each carry the phosphoserine modification. The tract at residues 388–424 (DSDLESLRQSSETPQPVLRERKSSISSISGRDDLMDY) is disordered. Phosphothreonine is present on residues Thr-546 and Thr-570. Coiled coils occupy residues 580–692 (TQEL…LDNC) and 718–803 (FEDL…LCNL). The tract at residues 866–934 (VSQPQSSEHF…LGQSNSCGSV (69 aa)) is disordered. Over residues 873 to 888 (EHFRSLEERKKQHKEG) the composition is skewed to basic and acidic residues. Position 894 is a phosphothreonine (Thr-894). Positions 901–919 (TPSLSPHFSSATMGRSTTP) are enriched in polar residues. The stretch at 1028 to 1094 (IARIEEMERL…QKLIEKEVKI (67 aa)) forms a coiled coil. In terms of domain architecture, PH spans 1139 to 1242 (EKTCRGYLIK…WMDVIVTGAE (104 aa)).

In terms of assembly, interacts with FLNC. Interacts with AMOTL2; interaction may facilitate PHLDB2 localization to the myotube podosome cortex that surrounds the core. Part of a cortical microtubule stabilization complex (CMSC) composed of KANK1, PPFIA1, PPFIBP1, ERC1/ELKS, PHLDB2/LL5beta, CLASPs, KIF21A and possibly additional interactors; within CMSCs KANK1 and PHLDB2/LL5beta appear to be the core components for targeting of microtubule-binding proteins KIF21A and CLASPs, whereas PPFIA1, PPFIBP1 and ERC1/ELKS serve as scaffolds for protein clustering. As to expression, expressed at postsynaptic membranes of skeletal neuromuscular junctions (at protein level).

Its subcellular location is the cytoplasm. The protein resides in the membrane. It localises to the cell projection. The protein localises to the podosome. It is found in the cell cortex. Functionally, seems to be involved in the assembly of the postsynaptic apparatus. May play a role in acetyl-choline receptor (AChR) aggregation in the postsynaptic membrane. The sequence is that of Pleckstrin homology-like domain family B member 2 (Phldb2) from Mus musculus (Mouse).